A 520-amino-acid polypeptide reads, in one-letter code: Bifunctional purine biosynthesis protein PurH (520 aa).

Residues 1-146 (MAPVALLSVS…KNHADVAVLT (146 aa)) form the MGS-like domain.

It belongs to the PurH family.

The catalysed reaction is (6R)-10-formyltetrahydrofolate + 5-amino-1-(5-phospho-beta-D-ribosyl)imidazole-4-carboxamide = 5-formamido-1-(5-phospho-D-ribosyl)imidazole-4-carboxamide + (6S)-5,6,7,8-tetrahydrofolate. It catalyses the reaction IMP + H2O = 5-formamido-1-(5-phospho-D-ribosyl)imidazole-4-carboxamide. It participates in purine metabolism; IMP biosynthesis via de novo pathway; 5-formamido-1-(5-phospho-D-ribosyl)imidazole-4-carboxamide from 5-amino-1-(5-phospho-D-ribosyl)imidazole-4-carboxamide (10-formyl THF route): step 1/1. It functions in the pathway purine metabolism; IMP biosynthesis via de novo pathway; IMP from 5-formamido-1-(5-phospho-D-ribosyl)imidazole-4-carboxamide: step 1/1. The chain is Bifunctional purine biosynthesis protein PurH from Synechococcus sp. (strain CC9605).